A 347-amino-acid chain; its full sequence is DNA-directed RNA polymerase subunit alpha (347 aa).

Residues 1–230 (MFKGFQKPKR…DHMTIFINFE (230 aa)) form an alpha N-terminal domain (alpha-NTD) region. The tract at residues 247–347 (MNEVLNRSVE…EDDGQDQIGE (101 aa)) is alpha C-terminal domain (alpha-CTD). Positions 320 to 347 (GRLVAPPPSAGGGPDFGPEDDGQDQIGE) are disordered. A compositionally biased stretch (acidic residues) spans 336–347 (GPEDDGQDQIGE).

This sequence belongs to the RNA polymerase alpha chain family. As to quaternary structure, homodimer. The RNAP catalytic core consists of 2 alpha, 1 beta, 1 beta' and 1 omega subunit. When a sigma factor is associated with the core the holoenzyme is formed, which can initiate transcription.

It carries out the reaction RNA(n) + a ribonucleoside 5'-triphosphate = RNA(n+1) + diphosphate. Functionally, DNA-dependent RNA polymerase catalyzes the transcription of DNA into RNA using the four ribonucleoside triphosphates as substrates. The polypeptide is DNA-directed RNA polymerase subunit alpha (Solibacter usitatus (strain Ellin6076)).